Reading from the N-terminus, the 3206-residue chain is Highly reducing polyketide synthase ltbA (3206 aa).

Residues 5 to 434 form the Ketosynthase family 3 (KS3) domain; it reads PAPIAIIGVG…GTNCHVILEA (430 aa). Active-site for beta-ketoacyl synthase activity residues include Cys179, His314, and His354. Polar residues predominate over residues 441–463; that stretch reads PTGTNGIKTNGTRINGIKTNGAD. A disordered region spans residues 441–472; that stretch reads PTGTNGIKTNGTRINGIKTNGADTNERESMKN. Residues 575–890 are malonyl-CoA:ACP transacylase (MAT) domain; sequence VFSGQGAQWH…EYLSALQRNT (316 aa). The tract at residues 958–1098 is N-terminal hotdog fold; it reads HDLLGLFDPA…GEITVEYETD (141 aa). Residues 958–1278 are dehydratase (DH) domain; that stretch reads HDLLGLFDPA…LLVNLRAIGE (321 aa). The region spanning 958 to 1284 is the PKS/mFAS DH domain; it reads HDLLGLFDPA…AIGETREDED (327 aa). Catalysis depends on His990, which acts as the Proton acceptor; for dehydratase activity. Residues 1128–1284 form a C-terminal hotdog fold region; the sequence is DTDMTKSEFY…AIGETREDED (157 aa). The Proton donor; for dehydratase activity role is filled by Asp1193. A methyltransferase (CMet) domain region spans residues 1450 to 1640; it reads ESGILVGPYE…LARNGFGGIH (191 aa). The enoyl reductase (ER) domain stretch occupies residues 1871-2185; that stretch reads LLSSLRFVDD…RKHTGKVVLQ (315 aa). The ketoreductase (KR) domain stretch occupies residues 2208-2395; it reads GTYVAAGGLG…SVDAHGALKE (188 aa). The Carrier domain maps to 2499–2577; sequence EEAEQLIRDA…ALAATVASRS (79 aa). At Ser2537 the chain carries O-(pantetheine 4'-phosphoryl)serine. A disordered region spans residues 2584-2611; it reads IRHSSRLQEATTQAENKDAPKNEKEGPS. Residues 2598–2610 are compositionally biased toward basic and acidic residues; the sequence is ENKDAPKNEKEGP. Residues 2994-3206 form a carnitine O-acyltransferase (cAT) domain region; that stretch reads HLIPSFGKAV…IKTIIQAGQE (213 aa).

It depends on pantetheine 4'-phosphate as a cofactor.

It participates in secondary metabolite biosynthesis. In terms of biological role, highly reducing polyketide synthase; part of the gene cluster that mediates the biosynthesis of luteodienoside A, a glycosylated polyketide consisting of an unusual 1-O-beta-D-glucopyranosyl-myo-inositol (glucinol) ester of 3-hydroxy-2,2,4-trimethylocta-4,6-dienoic acid. LtbA produces the trimethylated polyketide chain from acetyl-CoA, malonyl-CoA and S-adenosylmethionine (SAM). The ltbA carnitine O-acyltransferase (cAT) domain then uses glucinol produced by the glycosyltransferase ltbB as an offloading substrate to release luteodienoside A. Furthermore, the PKS C-methyltransferase (CMeT) domain is capable of catalysing gem-dimethylation of the 3-hydroxy-2,2,4-trimethylocta-4,6-dienoic acid intermediate, without requiring reversible product release and recapture by the cAT domain. Since ltbA and ltbB are sufficient for the biosynthesis of luteodienoside A, the functions of the methyltransferase ltbC and the FAD-binding monooxygenase ltbD within the pathway remain obscur. The chain is Highly reducing polyketide synthase ltbA from Aspergillus luteorubrus.